Here is a 192-residue protein sequence, read N- to C-terminus: Shikimate kinase (192 aa).

Residue 26 to 31 (ASGKSS) coordinates ATP. Ser30 is a binding site for Mg(2+). Substrate-binding residues include Asp48, Arg72, and Gly94. Arg132 contributes to the ATP binding site. Residue Arg151 coordinates substrate.

It belongs to the shikimate kinase family. In terms of assembly, monomer. The cofactor is Mg(2+).

The protein resides in the cytoplasm. The catalysed reaction is shikimate + ATP = 3-phosphoshikimate + ADP + H(+). It participates in metabolic intermediate biosynthesis; chorismate biosynthesis; chorismate from D-erythrose 4-phosphate and phosphoenolpyruvate: step 5/7. In terms of biological role, catalyzes the specific phosphorylation of the 3-hydroxyl group of shikimic acid using ATP as a cosubstrate. The chain is Shikimate kinase from Prochlorococcus marinus (strain MIT 9313).